A 217-amino-acid chain; its full sequence is Phosphatidylserine decarboxylase proenzyme (217 aa).

Residue Ser187 is the Schiff-base intermediate with substrate; via pyruvic acid of the active site. Pyruvic acid (Ser); by autocatalysis is present on Ser187.

The protein belongs to the phosphatidylserine decarboxylase family. PSD-A subfamily. Heterodimer of a large membrane-associated beta subunit and a small pyruvoyl-containing alpha subunit. Pyruvate is required as a cofactor. In terms of processing, is synthesized initially as an inactive proenzyme. Formation of the active enzyme involves a self-maturation process in which the active site pyruvoyl group is generated from an internal serine residue via an autocatalytic post-translational modification. Two non-identical subunits are generated from the proenzyme in this reaction, and the pyruvate is formed at the N-terminus of the alpha chain, which is derived from the carboxyl end of the proenzyme. The post-translation cleavage follows an unusual pathway, termed non-hydrolytic serinolysis, in which the side chain hydroxyl group of the serine supplies its oxygen atom to form the C-terminus of the beta chain, while the remainder of the serine residue undergoes an oxidative deamination to produce ammonia and the pyruvoyl prosthetic group on the alpha chain.

The protein localises to the cell membrane. The catalysed reaction is a 1,2-diacyl-sn-glycero-3-phospho-L-serine + H(+) = a 1,2-diacyl-sn-glycero-3-phosphoethanolamine + CO2. It participates in phospholipid metabolism; phosphatidylethanolamine biosynthesis; phosphatidylethanolamine from CDP-diacylglycerol: step 2/2. In terms of biological role, catalyzes the formation of phosphatidylethanolamine (PtdEtn) from phosphatidylserine (PtdSer). In Thermobifida fusca (strain YX), this protein is Phosphatidylserine decarboxylase proenzyme.